The chain runs to 454 residues: Bifunctional protein GlmU (454 aa).

Residues 1-225 (MNIVILAAGM…VWETLGVNSK (225 aa)) form a pyrophosphorylase region. UDP-N-acetyl-alpha-D-glucosamine-binding positions include 6-9 (LAAG), K20, Q71, 76-77 (GT), 98-100 (YGD), G135, E150, N165, and N223. D100 is a binding site for Mg(2+). Residue N223 coordinates Mg(2+). The segment at 226–246 (LQLAEVERIHQGNQARRLLEA) is linker. The tract at residues 247–454 (GVTLLDPARI…WQRPVKQPKQ (208 aa)) is N-acetyltransferase. Positions 329 and 347 each coordinate UDP-N-acetyl-alpha-D-glucosamine. H359 serves as the catalytic Proton acceptor. UDP-N-acetyl-alpha-D-glucosamine is bound by residues Y362 and N373. Acetyl-CoA is bound by residues A376, 382–383 (NY), S401, A419, and R436.

In the N-terminal section; belongs to the N-acetylglucosamine-1-phosphate uridyltransferase family. The protein in the C-terminal section; belongs to the transferase hexapeptide repeat family. Homotrimer. Requires Mg(2+) as cofactor.

The protein localises to the cytoplasm. It catalyses the reaction alpha-D-glucosamine 1-phosphate + acetyl-CoA = N-acetyl-alpha-D-glucosamine 1-phosphate + CoA + H(+). The catalysed reaction is N-acetyl-alpha-D-glucosamine 1-phosphate + UTP + H(+) = UDP-N-acetyl-alpha-D-glucosamine + diphosphate. It functions in the pathway nucleotide-sugar biosynthesis; UDP-N-acetyl-alpha-D-glucosamine biosynthesis; N-acetyl-alpha-D-glucosamine 1-phosphate from alpha-D-glucosamine 6-phosphate (route II): step 2/2. The protein operates within nucleotide-sugar biosynthesis; UDP-N-acetyl-alpha-D-glucosamine biosynthesis; UDP-N-acetyl-alpha-D-glucosamine from N-acetyl-alpha-D-glucosamine 1-phosphate: step 1/1. Its pathway is bacterial outer membrane biogenesis; LPS lipid A biosynthesis. Its function is as follows. Catalyzes the last two sequential reactions in the de novo biosynthetic pathway for UDP-N-acetylglucosamine (UDP-GlcNAc). The C-terminal domain catalyzes the transfer of acetyl group from acetyl coenzyme A to glucosamine-1-phosphate (GlcN-1-P) to produce N-acetylglucosamine-1-phosphate (GlcNAc-1-P), which is converted into UDP-GlcNAc by the transfer of uridine 5-monophosphate (from uridine 5-triphosphate), a reaction catalyzed by the N-terminal domain. The polypeptide is Bifunctional protein GlmU (Cupriavidus taiwanensis (strain DSM 17343 / BCRC 17206 / CCUG 44338 / CIP 107171 / LMG 19424 / R1) (Ralstonia taiwanensis (strain LMG 19424))).